A 183-amino-acid polypeptide reads, in one-letter code: Pentapeptide repeat protein MfpA (183 aa).

In terms of domain architecture, Pentapeptide repeat spans 113-147 (SLVDTDLRKCVLRGADLSGARTTGARLDDADLRGA).

Belongs to the pentapeptide repeat protein family. Homodimer. Probably interacts with DNA gyrase.

Its function is as follows. Might be involved in fluoroquinolone resistance. Inhibits ATP-independent DNA relaxation, ATP-dependent DNA supercoiling and ATP-dependent decatenation by endogenous gyrase, 50% inhibition occurs at 2 uM; inhibition is abolished if GyrA is mutated (Asp-87 to Gly or His). Also inhibits fluoroquinolone-promoted dsDNA cleavage. Increases fluoroquinolone (ciprofloxacin or moxifloxacin) inhibition of gyrase supercoiling activity in a concentration-dependent manner. Inhibits DNA relaxation and supercoiling by E.coli gyrase. Forms a structure that exhibits size, shape and electrostatic similarity to B-form DNA; it may bind to DNA gyrase which is postulated to protect it from fluoroquinolones. The chain is Pentapeptide repeat protein MfpA from Mycobacterium tuberculosis (strain ATCC 25618 / H37Rv).